The sequence spans 194 residues: Large ribosomal subunit protein bL9 (194 aa).

The interval 165–194 (PEDAEEAVANEEEAEAALLDDEDADEYEQG) is disordered. Positions 166 to 194 (EDAEEAVANEEEAEAALLDDEDADEYEQG) are enriched in acidic residues.

This sequence belongs to the bacterial ribosomal protein bL9 family.

In terms of biological role, binds to the 23S rRNA. This Rhodospirillum rubrum (strain ATCC 11170 / ATH 1.1.1 / DSM 467 / LMG 4362 / NCIMB 8255 / S1) protein is Large ribosomal subunit protein bL9.